A 253-amino-acid polypeptide reads, in one-letter code: Claudin domain-containing protein 1 (253 aa).

The helical transmembrane segment at 5–25 (FATAFVIACVLSLISTIYMAA) threads the bilayer. 2 N-linked (GlcNAc...) asparagine glycosylation sites follow: N42 and N72. 3 helical membrane passes run 141-161 (FLLP…GLCA), 175-195 (ILHL…VAGI), and 216-236 (FCLA…FIWA).

The protein belongs to the PMP-22/EMP/MP20 family. In terms of tissue distribution, in the brain, highly expressed in endothelial cells of the cerebellum compared to other regions (at protein level).

It localises to the cell junction. The protein resides in the tight junction. The protein localises to the cell membrane. Plays a role in negatively regulating the permeability of cells to small molecules. The polypeptide is Claudin domain-containing protein 1 (Cldnd1) (Mus musculus (Mouse)).